The primary structure comprises 193 residues: Probable gluconokinase (193 aa).

18-25 (GTAGTGKS) provides a ligand contact to ATP.

Belongs to the gluconokinase GntK/GntV family.

The protein resides in the cytoplasm. It catalyses the reaction D-gluconate + ATP = 6-phospho-D-gluconate + ADP + H(+). It participates in carbohydrate acid metabolism; D-gluconate degradation. The chain is Probable gluconokinase from Saccharomyces cerevisiae (strain ATCC 204508 / S288c) (Baker's yeast).